We begin with the raw amino-acid sequence, 121 residues long: Small ribosomal subunit protein uS10 (121 aa).

Residue Ser2 is modified to N-acetylserine. Residues Lys6, Lys8, Lys21, Lys32, and Lys101 each participate in a glycyl lysine isopeptide (Lys-Gly) (interchain with G-Cter in ubiquitin) cross-link.

The protein belongs to the universal ribosomal protein uS10 family. In terms of assembly, component of the small ribosomal subunit (SSU). Mature yeast ribosomes consist of a small (40S) and a large (60S) subunit. The 40S small subunit contains 1 molecule of ribosomal RNA (18S rRNA) and 33 different proteins (encoded by 57 genes). The large 60S subunit contains 3 rRNA molecules (25S, 5.8S and 5S rRNA) and 46 different proteins (encoded by 81 genes). Ubiquitinated at Lys-6 and Lys-8 by HEL2, to activate the ribosome quality control (RQC) pathway in response to stalled ribosomes. In terms of processing, N-terminally acetylated by acetyltransferase NatA. Also partially acetylated by NatC.

Its subcellular location is the cytoplasm. Component of the ribosome, a large ribonucleoprotein complex responsible for the synthesis of proteins in the cell. The small ribosomal subunit (SSU) binds messenger RNAs (mRNAs) and translates the encoded message by selecting cognate aminoacyl-transfer RNA (tRNA) molecules. The large subunit (LSU) contains the ribosomal catalytic site termed the peptidyl transferase center (PTC), which catalyzes the formation of peptide bonds, thereby polymerizing the amino acids delivered by tRNAs into a polypeptide chain. The nascent polypeptides leave the ribosome through a tunnel in the LSU and interact with protein factors that function in enzymatic processing, targeting, and the membrane insertion of nascent chains at the exit of the ribosomal tunnel. In Saccharomyces cerevisiae (strain ATCC 204508 / S288c) (Baker's yeast), this protein is Small ribosomal subunit protein uS10.